Here is a 477-residue protein sequence, read N- to C-terminus: Asparaginyl-tRNA synthetase (477 aa).

A mitochondrion-targeting transit peptide spans 1–14 (MLGARRLLGALRLC). Lys353 is subject to N6-acetyllysine.

Belongs to the class-II aminoacyl-tRNA synthetase family. In terms of assembly, homodimer. In terms of tissue distribution, expressed in brain and inner ear, including the cochlear epithelium and organ of Corti.

It localises to the mitochondrion matrix. It is found in the mitochondrion. It catalyses the reaction tRNA(Asn) + L-asparagine + ATP = L-asparaginyl-tRNA(Asn) + AMP + diphosphate + H(+). In terms of biological role, mitochondrial aminoacyl-tRNA synthetase that catalyzes the specific attachment of the asparagine amino acid (aa) to the homologous transfer RNA (tRNA), further participating in protein synthesis. The reaction occurs in a two steps: asparagine is first activated by ATP to form Asn-AMP and then transferred to the acceptor end of tRNA(Asn). The sequence is that of Asparaginyl-tRNA synthetase from Mus musculus (Mouse).